Reading from the N-terminus, the 686-residue chain is MSKIRVYKLAKELGKSSKELVNILNDLGVEVSSHMSTVEDETAELVKGMLQEEDKPEEKISKKEPDKKDRKKTKGKKQMTRTATQKEGTEHGQKDTDRREMRVTVNPPLSVKELAEKADIPVNRIIKTLIGLGVMATVNHQIDEEIVKKLIDKMNLKIKISQGEDKEEKPDKVQTDIKDKPEDLELRPPIVTVMGHVDHGKTTLLDVIRETRVAESEAGGITQHIGAYQAVVQNKKITFIDTPGHEAFTAMRARGARLTDIAILVVAADDGVMPQTVEAINHAKAADIPIIVAINKVDKSNAQPDMVKQQLTEHGLVPEDWGGDTICVPISALKKKNIDELLEMVLLVAEMEELKANPDRPAEGVIVESQLDKGRGPVATVLVKNGTLKVGDPILAGYTHGKVRAMINDQGKRIKEALPSTPVEVLGFSDVPAAGDYVQVLEDEKEARAIAEERLQKKQERDLQHDGRISLDGLYQQIKEGGVKELNLIIKGDVHGSIEALRESLVKLSTDEVTVNIIHTGVGAINETDVNLASASNAIIIGFNVRPDSNARKLAEREKVEIKTYRVIYKIIEDLKDAMAGMLEPELKEEVTGRAEVRATFKVPNVGTVAGLYVKEGFINRNNKVRLLRDGVVVYEGDIASLKRFKNDVREVKEGYECGLGIEGYNDIKEGDQIETYTYREIKRTL.

The interval 35–99 (MSTVEDETAE…EHGQKDTDRR (65 aa)) is disordered. Over residues 50–68 (LQEEDKPEEKISKKEPDKK) the composition is skewed to basic and acidic residues. Residues 69–79 (DRKKTKGKKQM) are compositionally biased toward basic residues. Residues 87–99 (EGTEHGQKDTDRR) show a composition bias toward basic and acidic residues. The tr-type G domain maps to 186–355 (LRPPIVTVMG…LLVAEMEELK (170 aa)). Residues 195–202 (GHVDHGKT) are G1. 195–202 (GHVDHGKT) provides a ligand contact to GTP. Residues 220–224 (GITQH) are G2. The interval 241–244 (DTPG) is G3. Residues 241–245 (DTPGH) and 295–298 (NKVD) contribute to the GTP site. A G4 region spans residues 295–298 (NKVD). A G5 region spans residues 331–333 (SAL).

Belongs to the TRAFAC class translation factor GTPase superfamily. Classic translation factor GTPase family. IF-2 subfamily.

The protein localises to the cytoplasm. Its function is as follows. One of the essential components for the initiation of protein synthesis. Protects formylmethionyl-tRNA from spontaneous hydrolysis and promotes its binding to the 30S ribosomal subunits. Also involved in the hydrolysis of GTP during the formation of the 70S ribosomal complex. This is Translation initiation factor IF-2 from Halothermothrix orenii (strain H 168 / OCM 544 / DSM 9562).